We begin with the raw amino-acid sequence, 332 residues long: NADH-quinone oxidoreductase subunit H (332 aa).

Helical transmembrane passes span 4-24 (FAFF…IFAS), 44-64 (IGPD…MIKL), 78-98 (FIFA…LAAI), 120-140 (VALL…FLGG), 165-185 (VGAL…LVDI), 194-214 (FSWL…ALFI), 255-275 (IAGA…FWII), 279-299 (IMMI…RAAF), and 312-332 (YLIL…AVLL).

The protein belongs to the complex I subunit 1 family. In terms of assembly, NDH-1 is composed of 14 different subunits. Subunits NuoA, H, J, K, L, M, N constitute the membrane sector of the complex.

The protein resides in the cell inner membrane. The enzyme catalyses a quinone + NADH + 5 H(+)(in) = a quinol + NAD(+) + 4 H(+)(out). Its function is as follows. NDH-1 shuttles electrons from NADH, via FMN and iron-sulfur (Fe-S) centers, to quinones in the respiratory chain. The immediate electron acceptor for the enzyme in this species is believed to be ubiquinone. Couples the redox reaction to proton translocation (for every two electrons transferred, four hydrogen ions are translocated across the cytoplasmic membrane), and thus conserves the redox energy in a proton gradient. This subunit may bind ubiquinone. This chain is NADH-quinone oxidoreductase subunit H, found in Campylobacter jejuni subsp. jejuni serotype O:6 (strain 81116 / NCTC 11828).